The sequence spans 81 residues: Acyl carrier protein (81 aa).

A Carrier domain is found at 2–80 (ASKDEILAGL…DAVNFIDNAQ (79 aa)). An O-(pantetheine 4'-phosphoryl)serine modification is found at serine 40.

Belongs to the acyl carrier protein (ACP) family. Post-translationally, 4'-phosphopantetheine is transferred from CoA to a specific serine of apo-ACP by AcpS. This modification is essential for activity because fatty acids are bound in thioester linkage to the sulfhydryl of the prosthetic group.

It localises to the cytoplasm. It participates in lipid metabolism; fatty acid biosynthesis. Its function is as follows. Carrier of the growing fatty acid chain in fatty acid biosynthesis. This chain is Acyl carrier protein, found in Kocuria rhizophila (strain ATCC 9341 / DSM 348 / NBRC 103217 / DC2201).